Consider the following 134-residue polypeptide: uncharacterized protein (134 aa).

The next 3 helical transmembrane spans lie at 8 to 28 (FTSL…TVMY), 54 to 74 (GFQA…TFLL), and 113 to 133 (LACF…RLVD).

Belongs to the cornichon family.

It is found in the endoplasmic reticulum membrane. This is an uncharacterized protein from Schizosaccharomyces pombe (strain 972 / ATCC 24843) (Fission yeast).